Consider the following 471-residue polypeptide: Glutamate--tRNA ligase 1 (471 aa).

Residues 10–20 carry the 'HIGH' region motif; sequence PSPTGYLHIGG. Zn(2+) is bound by residues Cys99, Cys101, Cys126, and Asp128. The short motif at 238–242 is the 'KMSKS' region element; that stretch reads RLSKR. ATP is bound at residue Lys241.

It belongs to the class-I aminoacyl-tRNA synthetase family. Glutamate--tRNA ligase type 1 subfamily. As to quaternary structure, monomer. Requires Zn(2+) as cofactor.

The protein resides in the cytoplasm. It catalyses the reaction tRNA(Glu) + L-glutamate + ATP = L-glutamyl-tRNA(Glu) + AMP + diphosphate. Functionally, catalyzes the attachment of glutamate to tRNA(Glu) in a two-step reaction: glutamate is first activated by ATP to form Glu-AMP and then transferred to the acceptor end of tRNA(Glu). The chain is Glutamate--tRNA ligase 1 from Alkalilimnicola ehrlichii (strain ATCC BAA-1101 / DSM 17681 / MLHE-1).